The following is a 665-amino-acid chain: Putative phospholipid:diacylglycerol acyltransferase 2 (665 aa).

Residues 48–68 (LIGYLCTAWWLLLFLYHSVPV) traverse the membrane as a helical segment. The Acyl-ester intermediate role is filled by Ser237. Catalysis depends on charge relay system residues Asp567 and His620.

It belongs to the AB hydrolase superfamily. Lipase family.

The protein localises to the membrane. The catalysed reaction is a glycerophospholipid + a 1,2-diacyl-sn-glycerol = a monoacylglycerophospholipid + a triacyl-sn-glycerol. The protein is Putative phospholipid:diacylglycerol acyltransferase 2 (PDAT2) of Arabidopsis thaliana (Mouse-ear cress).